A 115-amino-acid polypeptide reads, in one-letter code: uncharacterized protein (115 aa).

3 helical membrane-spanning segments follow: residues Ile6–Val26, Ala43–Leu63, and Ile84–Gln104.

The protein belongs to the AzlD/HI_1737/HP1330 family.

It is found in the cell membrane. This is an uncharacterized protein from Helicobacter pylori (strain ATCC 700392 / 26695) (Campylobacter pylori).